Here is a 293-residue protein sequence, read N- to C-terminus: DNA-directed RNA polymerase III subunit rpc6 (293 aa).

Belongs to the eukaryotic RPC34/RPC39 RNA polymerase subunit family. As to quaternary structure, component of the RNA polymerase III (Pol III) complex.

Its subcellular location is the nucleus. Functionally, DNA-dependent RNA polymerase catalyzes the transcription of DNA into RNA using the four ribonucleoside triphosphates as substrates. Specific peripheric component of RNA polymerase III which synthesizes small RNAs, such as 5S rRNA and tRNAs. May direct RNA Pol III binding to the TFIIIB-DNA complex. In Dictyostelium discoideum (Social amoeba), this protein is DNA-directed RNA polymerase III subunit rpc6 (polr3f).